A 510-amino-acid polypeptide reads, in one-letter code: 2,3-bisphosphoglycerate-independent phosphoglycerate mutase (510 aa).

Mn(2+) is bound at residue Asp-12. Residue Tyr-36 is modified to Phosphotyrosine. Residue Ser-62 participates in Mn(2+) binding. The Phosphoserine intermediate role is filled by Ser-62. Substrate-binding positions include His-123, Arg-153–Asp-154, Arg-185, Arg-191, Arg-261–Arg-264, and Lys-336. Residues Asp-403, His-407, Asp-444, His-445, and His-462 each coordinate Mn(2+).

It belongs to the BPG-independent phosphoglycerate mutase family. Monomer. Requires Mn(2+) as cofactor.

The catalysed reaction is (2R)-2-phosphoglycerate = (2R)-3-phosphoglycerate. Its pathway is carbohydrate degradation; glycolysis; pyruvate from D-glyceraldehyde 3-phosphate: step 3/5. In terms of biological role, essential for rapid growth and for sporulation. Catalyzes the interconversion of 2-phosphoglycerate and 3-phosphoglycerate. The polypeptide is 2,3-bisphosphoglycerate-independent phosphoglycerate mutase (Halalkalibacterium halodurans (strain ATCC BAA-125 / DSM 18197 / FERM 7344 / JCM 9153 / C-125) (Bacillus halodurans)).